Consider the following 423-residue polypeptide: Glucose-1-phosphate adenylyltransferase (423 aa).

Alpha-D-glucose 1-phosphate contacts are provided by residues Tyr98, Gly163, 178–179 (EK), and Ser189.

The protein belongs to the bacterial/plant glucose-1-phosphate adenylyltransferase family. In terms of assembly, homotetramer.

It catalyses the reaction alpha-D-glucose 1-phosphate + ATP + H(+) = ADP-alpha-D-glucose + diphosphate. It functions in the pathway glycan biosynthesis; glycogen biosynthesis. Functionally, involved in the biosynthesis of ADP-glucose, a building block required for the elongation reactions to produce glycogen. Catalyzes the reaction between ATP and alpha-D-glucose 1-phosphate (G1P) to produce pyrophosphate and ADP-Glc. The sequence is that of Glucose-1-phosphate adenylyltransferase from Thermotoga sp. (strain RQ2).